An 83-amino-acid chain; its full sequence is Gas vesicle protein G1 (83 aa).

This sequence belongs to the gas vesicle GvpG family. GvpF to GvpM interact with each other in vitro, and may form multi-subunit complex(es). Might interact with GvpA1.

The protein localises to the gas vesicle. Functionally, proteins GvpF to GvpM might be involved in nucleating gas vesicle formation. A minor component of the gas vesicle. Gas vesicles are hollow, gas filled proteinaceous nanostructures found in several microbial planktonic microorganisms. They allow positioning of halobacteria at the optimal depth for growth in the poorly aerated, shallow brine pools of their habitat. In terms of biological role, expression of a 9.5 kb p-vac DNA fragment containing 2 divergently transcribed regions (gvpD-gvpE-gvpF-gvpG-gvpH-gvpI-gvpJ-gvpK-gvpL-gvpM and gvpA-gvpC-gvpN-gvpO) allows H.volcanii to produce gas vesicles. A minimal gas vesicle can be made in H.volcanii by gvpA1-gvpO1 plus gvpF1-gvpG1-gvpJ1-gvpK1-gvpL1-gvpM1; lack of enough GvpJ1 prevents formation. A similar region restores gas vesicle production in H.halobium without the p-vac locus, but it still has the c-vac locus. In Halobacterium salinarum (strain ATCC 700922 / JCM 11081 / NRC-1) (Halobacterium halobium), this protein is Gas vesicle protein G1 (gvpG11).